The chain runs to 246 residues: 23S rRNA (guanosine-2'-O-)-methyltransferase RlmB (246 aa).

Residues G197, I217, and L226 each contribute to the S-adenosyl-L-methionine site.

This sequence belongs to the class IV-like SAM-binding methyltransferase superfamily. RNA methyltransferase TrmH family. RlmB subfamily.

It localises to the cytoplasm. The enzyme catalyses guanosine(2251) in 23S rRNA + S-adenosyl-L-methionine = 2'-O-methylguanosine(2251) in 23S rRNA + S-adenosyl-L-homocysteine + H(+). In terms of biological role, specifically methylates the ribose of guanosine 2251 in 23S rRNA. The polypeptide is 23S rRNA (guanosine-2'-O-)-methyltransferase RlmB (Haemophilus ducreyi (strain 35000HP / ATCC 700724)).